The following is a 58-amino-acid chain: Small ribosomal subunit protein bS21B (58 aa).

Belongs to the bacterial ribosomal protein bS21 family.

This is Small ribosomal subunit protein bS21B (rpsU2) from Nostoc sp. (strain PCC 7120 / SAG 25.82 / UTEX 2576).